The following is a 122-amino-acid chain: NADPH-dependent 7-cyano-7-deazaguanine reductase (122 aa).

The active-site Thioimide intermediate is the cysteine 34. Residue aspartate 41 is the Proton donor of the active site. Substrate is bound by residues valine 56–leucine 58 and histidine 75–glutamate 76.

This sequence belongs to the GTP cyclohydrolase I family. QueF type 1 subfamily.

Its subcellular location is the cytoplasm. It carries out the reaction 7-aminomethyl-7-carbaguanine + 2 NADP(+) = 7-cyano-7-deazaguanine + 2 NADPH + 3 H(+). It participates in tRNA modification; tRNA-queuosine biosynthesis. In terms of biological role, catalyzes the NADPH-dependent reduction of 7-cyano-7-deazaguanine (preQ0) to 7-aminomethyl-7-deazaguanine (preQ1). The polypeptide is NADPH-dependent 7-cyano-7-deazaguanine reductase (Anaeromyxobacter dehalogenans (strain 2CP-1 / ATCC BAA-258)).